The following is a 332-amino-acid chain: Serpentine receptor class alpha-10 (332 aa).

Over 1–26 (MTSSNISICATEDQMVLQTSLLLRVN) the chain is Extracellular. A helical membrane pass occupies residues 27-47 (VILMTTVAIFTFVLTYRALFI). The Cytoplasmic segment spans residues 48–64 (LKQRPIFHKSTKILLYT). The helical transmembrane segment at 65 to 85 (SLIFVNIHEIIFMVIQCVAFI) threads the bilayer. At 86 to 109 (RSFTLSDKPCEIMRTTLECRFKNH) the chain is on the extracellular side. A helical membrane pass occupies residues 110–132 (VLIFGIAGMNFNQFGLTVDRLLA). Topologically, residues 133-146 (TVIPQTYSHLGSFP) are cytoplasmic. A helical membrane pass occupies residues 147–167 (GILISILVIGCSIAAPLIIAI). Topologically, residues 168-191 (GDPYDDIVPNCFFFPQHSAPRANV) are extracellular. A helical membrane pass occupies residues 192 to 212 (FLIILSALVIASIFLNLIIIF). Over 213-239 (ANKKLEKGTRYYVSQRYQKREALISTR) the chain is Cytoplasmic. A helical membrane pass occupies residues 240 to 260 (IIVYIAASQFLGMVLYSTIVL). Topologically, residues 261–276 (TLRLHKSMIPVSMYHN) are extracellular. A helical transmembrane segment spans residues 277–297 (IVWWAYTVPFAAVALPALLIH). Residues 298–332 (RINLVGSNRKRVINRITAKVETQEEHMKSLKELWG) are Cytoplasmic-facing.

This sequence belongs to the nematode receptor-like protein sra family.

Its subcellular location is the membrane. The chain is Serpentine receptor class alpha-10 from Caenorhabditis briggsae.